The following is a 231-amino-acid chain: Ribosomal RNA small subunit methyltransferase G (231 aa).

3 residues coordinate S-adenosyl-L-methionine: glycine 85, phenylalanine 90, and arginine 154.

Belongs to the methyltransferase superfamily. RNA methyltransferase RsmG family.

The protein resides in the cytoplasm. The catalysed reaction is guanosine(527) in 16S rRNA + S-adenosyl-L-methionine = N(7)-methylguanosine(527) in 16S rRNA + S-adenosyl-L-homocysteine. Functionally, specifically methylates the N7 position of guanine in position 527 of 16S rRNA. In Rhodopseudomonas palustris (strain BisA53), this protein is Ribosomal RNA small subunit methyltransferase G.